The primary structure comprises 431 residues: Serine hydroxymethyltransferase 2 (431 aa).

Residues Leu131 and 135–137 (GHL) each bind (6S)-5,6,7,8-tetrahydrofolate. Lys240 carries the N6-(pyridoxal phosphate)lysine modification.

It belongs to the SHMT family. Homodimer. Pyridoxal 5'-phosphate serves as cofactor.

It localises to the cytoplasm. It carries out the reaction (6R)-5,10-methylene-5,6,7,8-tetrahydrofolate + glycine + H2O = (6S)-5,6,7,8-tetrahydrofolate + L-serine. It participates in one-carbon metabolism; tetrahydrofolate interconversion. It functions in the pathway amino-acid biosynthesis; glycine biosynthesis; glycine from L-serine: step 1/1. Functionally, catalyzes the reversible interconversion of serine and glycine with tetrahydrofolate (THF) serving as the one-carbon carrier. This reaction serves as the major source of one-carbon groups required for the biosynthesis of purines, thymidylate, methionine, and other important biomolecules. Also exhibits THF-independent aldolase activity toward beta-hydroxyamino acids, producing glycine and aldehydes, via a retro-aldol mechanism. This Vibrio parahaemolyticus serotype O3:K6 (strain RIMD 2210633) protein is Serine hydroxymethyltransferase 2.